A 79-amino-acid polypeptide reads, in one-letter code: Acyl carrier protein (79 aa).

Residues 2-77 (ADHASKIKDI…DAVAYLEAKV (76 aa)) form the Carrier domain. At Ser37 the chain carries O-(pantetheine 4'-phosphoryl)serine.

Belongs to the acyl carrier protein (ACP) family. In terms of processing, 4'-phosphopantetheine is transferred from CoA to a specific serine of apo-ACP by AcpS. This modification is essential for activity because fatty acids are bound in thioester linkage to the sulfhydryl of the prosthetic group.

The protein resides in the cytoplasm. Its pathway is lipid metabolism; fatty acid biosynthesis. Carrier of the growing fatty acid chain in fatty acid biosynthesis. The protein is Acyl carrier protein of Gemmatimonas aurantiaca (strain DSM 14586 / JCM 11422 / NBRC 100505 / T-27).